Here is a 423-residue protein sequence, read N- to C-terminus: Glutamyl-tRNA reductase (423 aa).

Substrate contacts are provided by residues 49–52, Ser-107, 112–114, and Gln-118; these read TCNR and EPQ. The active-site Nucleophile is Cys-50. 187-192 is an NADP(+) binding site; sequence GAGETI.

This sequence belongs to the glutamyl-tRNA reductase family. As to quaternary structure, homodimer.

It catalyses the reaction (S)-4-amino-5-oxopentanoate + tRNA(Glu) + NADP(+) = L-glutamyl-tRNA(Glu) + NADPH + H(+). It participates in porphyrin-containing compound metabolism; protoporphyrin-IX biosynthesis; 5-aminolevulinate from L-glutamyl-tRNA(Glu): step 1/2. Catalyzes the NADPH-dependent reduction of glutamyl-tRNA(Glu) to glutamate 1-semialdehyde (GSA). The sequence is that of Glutamyl-tRNA reductase from Pseudoalteromonas atlantica (strain T6c / ATCC BAA-1087).